The chain runs to 320 residues: Apolipoprotein E (320 aa).

A signal peptide spans 1–18 (MKVLWAAFLVAFLAGCQG). 8 tandem repeats follow at residues 82–103 (ALMD…EQLS), 104–125 (PVAE…ARLG), 126–147 (ADME…AMLG), 148–169 (QSTD…KRLL), 170–191 (RDVD…EGAE), 192–213 (RGVS…ARAA), 214–236 (TVGS…ERLR), and 237–258 (ARME…EQVE). An 8 X 22 AA approximate tandem repeats region spans residues 82 to 199 (ALMDETMKEL…AERGVSAIRE (118 aa)). At Met145 the chain carries Methionine sulfoxide. Ser149 is modified (phosphoserine). Positions 160 to 170 (HLRKLRKRLLR) are LDL and other lipoprotein receptors binding. Heparin is bound at residue 164 to 167 (LRKR). The interval 212-293 (AATVGSSLAS…SWFEPLVEDM (82 aa)) is lipid-binding and lipoprotein association. 232–239 (GERLRARM) serves as a coordination point for heparin. Positions 269-320 (QQMRLQAEAFQARLKSWFEPLVEDMQRQWAGLVEKVQAAVGASATPVPSDNH) are homooligomerization. The specificity for association with VLDL stretch occupies residues 281–293 (RLKSWFEPLVEDM).

The protein belongs to the apolipoprotein A1/A4/E family. In terms of assembly, homotetramer. May interact with ABCA1; functionally associated with ABCA1 in the biogenesis of HDLs. May interact with APP/A4 amyloid-beta peptide; the interaction is extremely stable in vitro but its physiological significance is unclear. May interact with MAPT. May interact with MAP2. In the cerebrospinal fluid, interacts with secreted SORL1. Interacts with PMEL; this allows the loading of PMEL luminal fragment on ILVs to induce fibril nucleation. APOE exists as multiple glycosylated and sialylated glycoforms within cells and in plasma. The extent of glycosylation and sialylation are tissue and context specific. In terms of processing, glycated in plasma VLDL. Post-translationally, phosphorylated by FAM20C in the extracellular medium.

The protein resides in the secreted. Its subcellular location is the extracellular space. The protein localises to the extracellular matrix. It is found in the extracellular vesicle. It localises to the endosome. The protein resides in the multivesicular body. In terms of biological role, APOE is an apolipoprotein, a protein associating with lipid particles, that mainly functions in lipoprotein-mediated lipid transport between organs via the plasma and interstitial fluids. APOE is a core component of plasma lipoproteins and is involved in their production, conversion and clearance. Apolipoproteins are amphipathic molecules that interact both with lipids of the lipoprotein particle core and the aqueous environment of the plasma. As such, APOE associates with chylomicrons, chylomicron remnants, very low density lipoproteins (VLDL) and intermediate density lipoproteins (IDL) but shows a preferential binding to high-density lipoproteins (HDL). It also binds a wide range of cellular receptors including the LDL receptor/LDLR, the LDL receptor-related proteins LRP1, LRP2 and LRP8 and the very low-density lipoprotein receptor/VLDLR that mediate the cellular uptake of the APOE-containing lipoprotein particles. Finally, APOE also has a heparin-binding activity and binds heparan-sulfate proteoglycans on the surface of cells, a property that supports the capture and the receptor-mediated uptake of APOE-containing lipoproteins by cells. A main function of APOE is to mediate lipoprotein clearance through the uptake of chylomicrons, VLDLs, and HDLs by hepatocytes. APOE is also involved in the biosynthesis by the liver of VLDLs as well as their uptake by peripheral tissues ensuring the delivery of triglycerides and energy storage in muscle, heart and adipose tissues. By participating in the lipoprotein-mediated distribution of lipids among tissues, APOE plays a critical role in plasma and tissues lipid homeostasis. APOE is also involved in two steps of reverse cholesterol transport, the HDLs-mediated transport of cholesterol from peripheral tissues to the liver, and thereby plays an important role in cholesterol homeostasis. First, it is functionally associated with ABCA1 in the biogenesis of HDLs in tissues. Second, it is enriched in circulating HDLs and mediates their uptake by hepatocytes. APOE also plays an important role in lipid transport in the central nervous system, regulating neuron survival and sprouting. The protein is Apolipoprotein E (APOE) of Saimiri boliviensis boliviensis (Bolivian squirrel monkey).